The sequence spans 602 residues: Probable translation initiation factor IF-2 (602 aa).

The region spanning Leu-18–Lys-233 is the tr-type G domain. The segment at Gly-27–Thr-34 is G1. Residue Gly-27–Thr-34 coordinates GTP. The segment at Ala-52 to His-56 is G2. A G3 region spans residues Asp-88–Gly-91. GTP-binding positions include Asp-88–His-92 and Asn-142–Asp-145. A G4 region spans residues Asn-142 to Asp-145. The G5 stretch occupies residues Ser-210 to Ile-212.

Belongs to the TRAFAC class translation factor GTPase superfamily. Classic translation factor GTPase family. IF-2 subfamily.

In terms of biological role, function in general translation initiation by promoting the binding of the formylmethionine-tRNA to ribosomes. Seems to function along with eIF-2. This Methanothrix thermoacetophila (strain DSM 6194 / JCM 14653 / NBRC 101360 / PT) (Methanosaeta thermophila) protein is Probable translation initiation factor IF-2.